The chain runs to 522 residues: Putative malate dehydrogenase 1B (522 aa).

A disordered region spans residues 495 to 522 (EETEKSSSEDTPEAAAAAVSTGDETVPS).

It belongs to the LDH/MDH superfamily. MDH type 2 family.

This Branchiostoma floridae (Florida lancelet) protein is Putative malate dehydrogenase 1B (MDH1B).